A 237-amino-acid polypeptide reads, in one-letter code: Ribonuclease PH (237 aa).

Residues Arg-86 and 124 to 126 contribute to the phosphate site; that span reads GTR.

This sequence belongs to the RNase PH family. In terms of assembly, homohexameric ring arranged as a trimer of dimers.

The enzyme catalyses tRNA(n+1) + phosphate = tRNA(n) + a ribonucleoside 5'-diphosphate. Phosphorolytic 3'-5' exoribonuclease that plays an important role in tRNA 3'-end maturation. Removes nucleotide residues following the 3'-CCA terminus of tRNAs; can also add nucleotides to the ends of RNA molecules by using nucleoside diphosphates as substrates, but this may not be physiologically important. Probably plays a role in initiation of 16S rRNA degradation (leading to ribosome degradation) during starvation. The sequence is that of Ribonuclease PH from Cereibacter sphaeroides (strain ATCC 17025 / ATH 2.4.3) (Rhodobacter sphaeroides).